Consider the following 345-residue polypeptide: Pectin lyase (345 aa).

The N-terminal stretch at 1-24 is a signal peptide; it reads MKRFCLWFAVFSLLLVLLPGKAFG. Arg234 is an active-site residue.

It belongs to the polysaccharide lyase 1 family.

Its subcellular location is the secreted. The enzyme catalyses Eliminative cleavage of (1-&gt;4)-alpha-D-galacturonan methyl ester to give oligosaccharides with 4-deoxy-6-O-methyl-alpha-D-galact-4-enuronosyl groups at their non-reducing ends.. With respect to regulation, inhibited by Hg(2+) and Mn(2+). Not affected by EDTA in vitro. Catalyzes the depolymerization of pectins of methyl esterification degree from 13 to 75%, with an endo mode of action. Cannot degrade polygalacturonate. Also displays protopectinase activity, i.e. releases pectin from protopectin. This Bacillus subtilis protein is Pectin lyase (pelB).